The chain runs to 444 residues: Methylenetetrahydrofolate--tRNA-(uracil-5-)-methyltransferase TrmFO (444 aa).

10 to 15 (GAGLAG) provides a ligand contact to FAD.

This sequence belongs to the MnmG family. TrmFO subfamily. It depends on FAD as a cofactor.

Its subcellular location is the cytoplasm. It carries out the reaction uridine(54) in tRNA + (6R)-5,10-methylene-5,6,7,8-tetrahydrofolate + NADH + H(+) = 5-methyluridine(54) in tRNA + (6S)-5,6,7,8-tetrahydrofolate + NAD(+). The catalysed reaction is uridine(54) in tRNA + (6R)-5,10-methylene-5,6,7,8-tetrahydrofolate + NADPH + H(+) = 5-methyluridine(54) in tRNA + (6S)-5,6,7,8-tetrahydrofolate + NADP(+). Functionally, catalyzes the folate-dependent formation of 5-methyl-uridine at position 54 (M-5-U54) in all tRNAs. The sequence is that of Methylenetetrahydrofolate--tRNA-(uracil-5-)-methyltransferase TrmFO from Streptococcus pneumoniae serotype 2 (strain D39 / NCTC 7466).